Reading from the N-terminus, the 304-residue chain is Acetylglutamate kinase (304 aa).

Residues 70–71 (GG), R92, and N185 each bind substrate.

It belongs to the acetylglutamate kinase family. ArgB subfamily.

Its subcellular location is the cytoplasm. It catalyses the reaction N-acetyl-L-glutamate + ATP = N-acetyl-L-glutamyl 5-phosphate + ADP. It participates in amino-acid biosynthesis; L-arginine biosynthesis; N(2)-acetyl-L-ornithine from L-glutamate: step 2/4. Its function is as follows. Catalyzes the ATP-dependent phosphorylation of N-acetyl-L-glutamate. The chain is Acetylglutamate kinase from Paracoccus denitrificans (strain Pd 1222).